A 401-amino-acid chain; its full sequence is Alternative oxidase, mitochondrial (401 aa).

The interval 53 to 81 (KRASLSLQPSVREAEKSQGPVVGSEGRGV) is disordered. The helical transmembrane segment at 184 to 204 (LFRIILLESIAGVPGMVGGTL) threads the bilayer. Residues glutamate 191, glutamate 230, and histidine 233 each contribute to the Fe cation site. Residues 249–269 (ALVLAAQGVFYNAFFLTYLIS) form a helical membrane-spanning segment. 4 residues coordinate Fe cation: glutamate 281, glutamate 282, glutamate 335, and histidine 338.

It belongs to the alternative oxidase family. It depends on Fe cation as a cofactor.

It localises to the mitochondrion inner membrane. Its function is as follows. Catalyzes cyanide-resistant oxygen consumption. May increase respiration when the cytochrome respiratory pathway is restricted, or in response to low temperatures. The protein is Alternative oxidase, mitochondrial (AOX1) of Cryptococcus neoformans var. grubii serotype A (strain H99 / ATCC 208821 / CBS 10515 / FGSC 9487) (Filobasidiella neoformans var. grubii).